A 525-amino-acid polypeptide reads, in one-letter code: Tigger transposable element-derived protein 2 (525 aa).

In terms of domain architecture, HTH psq-type spans M1–I52. 2 consecutive DNA-binding regions (H-T-H motif) follow at residues F28–N48 and T100–R132. Positions K67–A139 constitute an HTH CENPB-type domain. The DDE-1 domain occupies L168 to W385. The disordered stretch occupies residues Q442–K474.

This sequence belongs to the tigger transposable element derived protein family.

The protein localises to the nucleus. The chain is Tigger transposable element-derived protein 2 (TIGD2) from Homo sapiens (Human).